The chain runs to 594 residues: Choline dehydrogenase, mitochondrial (594 aa).

Residues Met-1–Ala-29 constitute a mitochondrion transit peptide. Residue Ser-42 to Glu-71 participates in FAD binding. Lys-436 carries the post-translational modification N6-succinyllysine. N6-acetyllysine; alternate is present on residues Lys-484 and Lys-496. 2 positions are modified to N6-succinyllysine; alternate: Lys-484 and Lys-496. His-511 functions as the Proton acceptor in the catalytic mechanism. N6-acetyllysine is present on Lys-580.

The protein belongs to the GMC oxidoreductase family. FAD is required as a cofactor.

The protein localises to the mitochondrion inner membrane. It carries out the reaction choline + A = betaine aldehyde + AH2. Its pathway is amine and polyamine biosynthesis; betaine biosynthesis via choline pathway; betaine aldehyde from choline (cytochrome c reductase route): step 1/1. This is Choline dehydrogenase, mitochondrial (CHDH) from Homo sapiens (Human).